The following is a 165-amino-acid chain: Protein NKG7 (165 aa).

4 helical membrane-spanning segments follow: residues 9–29, 61–81, 92–112, and 133–153; these read LFAGSLGLTSSLIALTTDFWI, FCILAVLWGLVSVSFLILSCI, LVSTVMAFSAALSILVAMAVY, and FYLGWVSFILFLFAGCLSLGA.

The protein belongs to the PMP-22/EMP/MP20 family. In terms of tissue distribution, predominantly expressed by leukocytes with cytotoxic activity such as CD8(+) T-cells and natural killer cells.

It is found in the cell membrane. Its subcellular location is the cytolytic granule membrane. In terms of biological role, regulates cytotoxic granule exocytosis in effector lymphocytes, thus acting as a critical mediator of inflammation in a broad range of infectious and non-infectious diseases. Essential for cytotoxic degranulation of natural killer (NK) cells and CD8(+) T-cells and for the activation of CD4(+) T-cells following infection. Plays a critical role in CD8(+) T-cell and NK cell-mediated cytolysis of target cells and contributes to the cytolytic activity via the perforin/granzyme pathway by enhancing exocytosis of LAMP1-carrying lytic granules. Contributes to NK cell-mediated control of cancer metastasis. This chain is Protein NKG7 (Nkg7), found in Mus musculus (Mouse).